Here is a 512-residue protein sequence, read N- to C-terminus: ATP synthase subunit alpha (512 aa).

Residue glycine 169 to threonine 176 coordinates ATP.

The protein belongs to the ATPase alpha/beta chains family. In terms of assembly, F-type ATPases have 2 components, CF(1) - the catalytic core - and CF(0) - the membrane proton channel. CF(1) has five subunits: alpha(3), beta(3), gamma(1), delta(1), epsilon(1). CF(0) has three main subunits: a(1), b(2) and c(9-12). The alpha and beta chains form an alternating ring which encloses part of the gamma chain. CF(1) is attached to CF(0) by a central stalk formed by the gamma and epsilon chains, while a peripheral stalk is formed by the delta and b chains.

It is found in the cell inner membrane. It carries out the reaction ATP + H2O + 4 H(+)(in) = ADP + phosphate + 5 H(+)(out). Functionally, produces ATP from ADP in the presence of a proton gradient across the membrane. The alpha chain is a regulatory subunit. The chain is ATP synthase subunit alpha from Aromatoleum aromaticum (strain DSM 19018 / LMG 30748 / EbN1) (Azoarcus sp. (strain EbN1)).